The chain runs to 72 residues: Palustrin-2CG1 (72 aa).

The signal sequence occupies residues 1–22 (MFTMKKPLLLLFFLGTISLSLC). A propeptide spans 23–39 (QEERGADEDDGEMTEEV) (removed in mature form). Cysteines 64 and 70 form a disulfide.

As to expression, expressed by the skin glands.

It is found in the secreted. Antimicrobial peptide active against a variety of Gram-positive and some Gram-negative bacterial strains. Has antifungal activity against a slime mold isolate. Has hemolytic activity against human erythrocytes. In Amolops chunganensis (Chungan torrent frog), this protein is Palustrin-2CG1.